The primary structure comprises 591 residues: Parathyroid hormone/parathyroid hormone-related peptide receptor (591 aa).

A signal peptide spans 1–26 (MGAARIAPSLALLLCCPVLSSAYALV). Over 27–188 (DADDVFTKEE…REREVFDRLG (162 aa)) the chain is Extracellular. 3 disulfide bridges follow: Cys-48-Cys-117, Cys-108-Cys-148, and Cys-131-Cys-170. Positions 67–104 (KGWTPASTSGKPRKEKASGKFYPESKENKDVPTGSRRR) are disordered. Basic and acidic residues predominate over residues 81 to 96 (EKASGKFYPESKENKD). Residues Asn-151, Asn-161, Asn-166, and Asn-176 are each glycosylated (N-linked (GlcNAc...) asparagine). Residues 189 to 212 (MIYTVGYSMSLASLTVAVLILAYF) traverse the membrane as a helical segment. The Cytoplasmic segment spans residues 213–219 (RRLHCTR). The helical transmembrane segment at 220-239 (NYIHMHMFLSFMLRAASIFV) threads the bilayer. Residues 240-282 (KDAVLYSGFTLDEAERLTEEELHIIAQVPPPPAAAAVGYAGCR) lie on the Extracellular side of the membrane. A helical membrane pass occupies residues 283–306 (VAVTFFLYFLATNYYWILVEGLYL). Topologically, residues 307-320 (HSLIFMAFFSEKKY) are cytoplasmic. Residues 321-342 (LWGFTIFGWGLPAVFVAVWVGV) traverse the membrane as a helical segment. Topologically, residues 343 to 361 (RATLANTGCWDLSSGHKKW) are extracellular. A helical membrane pass occupies residues 362–382 (IIQVPILASVVLNFILFINII). At 383 to 409 (RVLATKLRETNAGRCDTRQQYRKLLRS) the chain is on the cytoplasmic side. The chain crosses the membrane as a helical span at residues 410 to 428 (TLVLVPLFGVHYTVFMALP). Topologically, residues 429-440 (YTEVSGTLWQIQ) are extracellular. The chain crosses the membrane as a helical span at residues 441 to 463 (MHYEMLFNSFQGFFVAIIYCFCN). Residues 464-591 (GEVQAEIRKS…LLQEEWETVM (128 aa)) are Cytoplasmic-facing. An Important for interaction with G proteins motif is present at residues 474–477 (WSRW). The disordered stretch occupies residues 516-544 (LPLSPRLPPATTNGHSQLPGHAKPGAPAT).

This sequence belongs to the G-protein coupled receptor 2 family. As to quaternary structure, homodimer in the absence of bound ligand. Peptide hormone binding leads to dissociation of the homodimer. In terms of processing, N-glycosylated.

Its subcellular location is the cell membrane. Its function is as follows. G-protein-coupled receptor for parathyroid hormone (PTH) and for parathyroid hormone-related peptide (PTHLH). Ligand binding causes a conformation change that triggers signaling via guanine nucleotide-binding proteins (G proteins) and modulates the activity of downstream effectors, such as adenylate cyclase (cAMP). PTH1R is coupled to G(s) G alpha proteins and mediates activation of adenylate cyclase activity. PTHLH dissociates from PTH1R more rapidly than PTH; as consequence, the cAMP response induced by PTHLH decays faster than the response induced by PTH. The protein is Parathyroid hormone/parathyroid hormone-related peptide receptor (Pth1r) of Rattus norvegicus (Rat).